A 253-amino-acid polypeptide reads, in one-letter code: MEFSGSPMALFCCVFFLFLTGSLAQGIGSIVTSDLFNEMLKNRNDGRCPANGFYTYDAFIAAANSFPGFGTTGDDTARRKEIAAFFGQTSHETTGGSLSAEPFTGGYCFVRQNDQSDRYYGRGPIQLTNRNNYEKAGTAIGQELVNNPDLVATDATISFKTAIWFWMTPQDNKPSSHDVIIGRWTPSAADQAANRVPGYGVITNIINGGIECGIGRNDAVEDRIGYYRRYCGMLNVAPGENLDCYNQRNFGQG.

An N-terminal signal peptide occupies residues 1–24; it reads MEFSGSPMALFCCVFFLFLTGSLA. The active-site Proton donor is E92. The cysteines at positions 212 and 244 are disulfide-linked.

The protein belongs to the glycosyl hydrolase 19 family. Chitinase class I subfamily.

It localises to the secreted. It catalyses the reaction Random endo-hydrolysis of N-acetyl-beta-D-glucosaminide (1-&gt;4)-beta-linkages in chitin and chitodextrins.. In terms of biological role, defense against chitin-containing fungal pathogens. The chain is Acidic endochitinase Q from Nicotiana tabacum (Common tobacco).